Consider the following 104-residue polypeptide: Pyrimidine/purine nucleoside phosphorylase (104 aa).

This sequence belongs to the nucleoside phosphorylase PpnP family.

The catalysed reaction is a purine D-ribonucleoside + phosphate = a purine nucleobase + alpha-D-ribose 1-phosphate. It carries out the reaction adenosine + phosphate = alpha-D-ribose 1-phosphate + adenine. The enzyme catalyses cytidine + phosphate = cytosine + alpha-D-ribose 1-phosphate. It catalyses the reaction guanosine + phosphate = alpha-D-ribose 1-phosphate + guanine. The catalysed reaction is inosine + phosphate = alpha-D-ribose 1-phosphate + hypoxanthine. It carries out the reaction thymidine + phosphate = 2-deoxy-alpha-D-ribose 1-phosphate + thymine. The enzyme catalyses uridine + phosphate = alpha-D-ribose 1-phosphate + uracil. It catalyses the reaction xanthosine + phosphate = alpha-D-ribose 1-phosphate + xanthine. Functionally, catalyzes the phosphorolysis of diverse nucleosides, yielding D-ribose 1-phosphate and the respective free bases. Can use uridine, adenosine, guanosine, cytidine, thymidine, inosine and xanthosine as substrates. Also catalyzes the reverse reactions. This Herminiimonas arsenicoxydans protein is Pyrimidine/purine nucleoside phosphorylase.